A 132-amino-acid polypeptide reads, in one-letter code: ATP synthase epsilon chain (132 aa).

The span at 88 to 102 (IDKERAEAARQRAQE) shows a compositional bias: basic and acidic residues. A disordered region spans residues 88–112 (IDKERAEAARQRAQERLNSQSDDTD).

It belongs to the ATPase epsilon chain family. F-type ATPases have 2 components, CF(1) - the catalytic core - and CF(0) - the membrane proton channel. CF(1) has five subunits: alpha(3), beta(3), gamma(1), delta(1), epsilon(1). CF(0) has three main subunits: a, b and c. The F(1)F(0) complex interacts with SpoIIIJ and YqjG; YqgA is found in the same complex.

It localises to the cell membrane. Its function is as follows. Produces ATP from ADP in the presence of a proton gradient across the membrane. The chain is ATP synthase epsilon chain (atpC) from Bacillus subtilis (strain 168).